Reading from the N-terminus, the 321-residue chain is Hydrolase 3 (321 aa).

Positions 80–82 (HGA) match the Involved in the stabilization of the negatively charged intermediate by the formation of the oxyanion hole motif. Active-site residues include Ser172 and Asp267.

Belongs to the 'GDXG' lipolytic enzyme family.

It catalyses the reaction dihydroprecondylocarpine acetate + NADPH = (+)-vincadifformine + acetate + NADP(+). It participates in alkaloid biosynthesis. Its function is as follows. Component of the seco-iridoid and derivatives monoterpenoid indole alkaloids (MIAs, e.g. vincadifformine) biosynthesis pathway. Catalyzes the conversion of O-acetylstemmadenine (OAS) to vincadifformine. May also trigger the formation of additional unknown MIAs. The protein is Hydrolase 3 of Catharanthus roseus (Madagascar periwinkle).